A 262-amino-acid polypeptide reads, in one-letter code: Cytochrome c oxidase subunit 2 (262 aa).

The next 2 membrane-spanning stretches (helical) occupy residues 31–51 (HIMF…YVII) and 72–92 (IIWT…SFIL). Cu cation-binding residues include H175, C210, E212, C214, H218, and M221. E212 lines the Mg(2+) pocket.

This sequence belongs to the cytochrome c oxidase subunit 2 family. Component of the cytochrome c oxidase (complex IV, CIV), a multisubunit enzyme composed of a catalytic core of 3 subunits and several supernumerary subunits. The complex exists as a monomer or a dimer and forms supercomplexes (SCs) in the inner mitochondrial membrane with ubiquinol-cytochrome c oxidoreductase (cytochrome b-c1 complex, complex III, CIII). Cu cation serves as cofactor.

The protein localises to the mitochondrion inner membrane. It carries out the reaction 4 Fe(II)-[cytochrome c] + O2 + 8 H(+)(in) = 4 Fe(III)-[cytochrome c] + 2 H2O + 4 H(+)(out). In terms of biological role, component of the cytochrome c oxidase, the last enzyme in the mitochondrial electron transport chain which drives oxidative phosphorylation. The respiratory chain contains 3 multisubunit complexes succinate dehydrogenase (complex II, CII), ubiquinol-cytochrome c oxidoreductase (cytochrome b-c1 complex, complex III, CIII) and cytochrome c oxidase (complex IV, CIV), that cooperate to transfer electrons derived from NADH and succinate to molecular oxygen, creating an electrochemical gradient over the inner membrane that drives transmembrane transport and the ATP synthase. Cytochrome c oxidase is the component of the respiratory chain that catalyzes the reduction of oxygen to water. Electrons originating from reduced cytochrome c in the intermembrane space (IMS) are transferred via the dinuclear copper A center (CU(A)) of subunit 2 and heme A of subunit 1 to the active site in subunit 1, a binuclear center (BNC) formed by heme A3 and copper B (CU(B)). The BNC reduces molecular oxygen to 2 water molecules using 4 electrons from cytochrome c in the IMS and 4 protons from the mitochondrial matrix. This Candida albicans (strain SC5314 / ATCC MYA-2876) (Yeast) protein is Cytochrome c oxidase subunit 2 (COX2).